Consider the following 440-residue polypeptide: Beta-1,3-galactosyl-O-glycosyl-glycoprotein beta-1,6-N-acetylglucosaminyltransferase (440 aa).

At 1–12 (MKMAGWKKKLCR) the chain is on the cytoplasmic side. Residues 13 to 30 (GHHLWALGCYMLLAVVSL) traverse the membrane as a helical; Signal-anchor for type II membrane protein segment. At 31–440 (RLSLRFKCDV…RHKAIYGTEL (410 aa)) the chain is on the lumenal side. Residues asparagine 72 and asparagine 108 are each glycosylated (N-linked (GlcNAc...) asparagine; by host). 4 cysteine pairs are disulfide-bonded: cysteine 73-cysteine 230, cysteine 164-cysteine 384, cysteine 185-cysteine 212, and cysteine 393-cysteine 425.

The protein belongs to the glycosyltransferase 14 family.

It is found in the host Golgi apparatus membrane. It catalyses the reaction a 3-O-[beta-D-galactosyl-(1-&gt;3)-N-acetyl-alpha-D-galactosaminyl]-L-seryl-[protein] + UDP-N-acetyl-alpha-D-glucosamine = 3-O-{beta-D-galactosyl-(1-&gt;3)-[N-acetyl-beta-D-glucosaminyl-(1-&gt;6)]-N-acetyl-alpha-D-galactosaminyl}-L-seryl-[protein] + UDP + H(+). It carries out the reaction a 3-O-[beta-D-galactosyl-(1-&gt;3)-N-acetyl-alpha-D-galactosaminyl]-L-threonyl-[protein] + UDP-N-acetyl-alpha-D-glucosamine = a 3-O-{beta-D-galactosyl-(1-&gt;3)-[N-acetyl-beta-D-glucosaminyl-(1-&gt;6)]-N-acetyl-alpha-D-galactosaminyl}-L-threonyl-[protein] + UDP + H(+). The enzyme catalyses a beta-D-Gal-(1-&gt;4)-beta-D-GlcNAc-(1-&gt;3)-beta-D-Gal-(1-&gt;4)-beta-D-GlcNAc derivative + UDP-N-acetyl-alpha-D-glucosamine = a beta-D-Gal-(1-&gt;4)-beta-D-GlcNAc-(1-&gt;3)-[beta-D-GlcNAc-(1-&gt;6)]-beta-D-Gal-(1-&gt;4)-N-acetyl-beta-D-glucosaminyl derivative + UDP + H(+). The catalysed reaction is 3-O-[N-acetyl-beta-D-glucosaminyl-(1-&gt;3)-N-acetyl-alpha-D-galactosaminyl]-L-seryl-[protein] + UDP-N-acetyl-alpha-D-glucosamine = 3-O-[N-acetyl-beta-D-glucosaminyl-(1-&gt;3)-[N-acetyl-beta-D-glucosaminyl-(1-&gt;6)]-N-acetyl-alpha-D-galactosaminyl]-L-seryl-[protein] + UDP + H(+). It catalyses the reaction a 3-O-[N-acetyl-beta-D-glucosaminyl-(1-&gt;3)-N-acetyl-alpha-D-galactosaminyl]-L-threonyl-[protein] + UDP-N-acetyl-alpha-D-glucosamine = 3-O-[N-acetyl-beta-D-glucosaminyl-(1-&gt;3)-[N-acetyl-beta-D-glucosaminyl-(1-&gt;6)]-N-acetyl-alpha-D-galactosaminyl]-L-threonyl-[protein] + UDP + H(+). It functions in the pathway protein modification; protein glycosylation. Non-essential glycosyltransferase that can synthesize all known mucin beta 6 N-acetylglucosaminides. Mediates core 2 and core 4 O-glycan branching, 2 important steps in mucin-type biosynthesis. Has also I-branching enzyme activity by converting linear into branched poly-N-acetyllactosaminoglycans. Contributes to the post-translational modifications of structural proteins. The protein is Beta-1,3-galactosyl-O-glycosyl-glycoprotein beta-1,6-N-acetylglucosaminyltransferase (Bo17) of Bos taurus (Bovine).